A 257-amino-acid chain; its full sequence is Pyridoxal phosphate homeostasis protein (257 aa).

Position 2 is an N-acetylserine (Ser2). Lys49 carries the post-translational modification N6-(pyridoxal phosphate)lysine.

This sequence belongs to the pyridoxal phosphate-binding protein YggS/PROSC family.

The protein localises to the cytoplasm. It is found in the nucleus. Its function is as follows. Pyridoxal 5'-phosphate (PLP)-binding protein, which may be involved in intracellular homeostatic regulation of pyridoxal 5'-phosphate (PLP), the active form of vitamin B6. This is Pyridoxal phosphate homeostasis protein from Saccharomyces cerevisiae (strain ATCC 204508 / S288c) (Baker's yeast).